The primary structure comprises 342 residues: N-acetyl-gamma-glutamyl-phosphate reductase (342 aa).

Residue Cys149 is part of the active site.

This sequence belongs to the NAGSA dehydrogenase family. Type 1 subfamily.

It localises to the cytoplasm. It carries out the reaction N-acetyl-L-glutamate 5-semialdehyde + phosphate + NADP(+) = N-acetyl-L-glutamyl 5-phosphate + NADPH + H(+). Its pathway is amino-acid biosynthesis; L-arginine biosynthesis; N(2)-acetyl-L-ornithine from L-glutamate: step 3/4. Its function is as follows. Catalyzes the NADPH-dependent reduction of N-acetyl-5-glutamyl phosphate to yield N-acetyl-L-glutamate 5-semialdehyde. In Rhodobacter capsulatus (strain ATCC BAA-309 / NBRC 16581 / SB1003), this protein is N-acetyl-gamma-glutamyl-phosphate reductase.